Here is a 545-residue protein sequence, read N- to C-terminus: Chaperonin GroEL (545 aa).

ATP contacts are provided by residues 29 to 32, lysine 50, 86 to 90, glycine 414, 477 to 479, and aspartate 493; these read TMGP, DGTTT, and DAA.

It belongs to the chaperonin (HSP60) family. In terms of assembly, forms a cylinder of 14 subunits composed of two heptameric rings stacked back-to-back. Interacts with the co-chaperonin GroES.

It localises to the cytoplasm. It catalyses the reaction ATP + H2O + a folded polypeptide = ADP + phosphate + an unfolded polypeptide.. Its function is as follows. Together with its co-chaperonin GroES, plays an essential role in assisting protein folding. The GroEL-GroES system forms a nano-cage that allows encapsulation of the non-native substrate proteins and provides a physical environment optimized to promote and accelerate protein folding. This is Chaperonin GroEL from Campylobacter jejuni (strain RM1221).